Here is a 435-residue protein sequence, read N- to C-terminus: Diguanylate cyclase TpbB (435 aa).

The Cytoplasmic portion of the chain corresponds to 1-22; it reads MNRRRRYTGSNPSLRRVLYRAH. The helical transmembrane segment at 23 to 43 threads the bilayer; it reads LGVALVAVFTAGLAVTLVGLL. Over 44–154 the chain is Periplasmic; the sequence is TLRAYADPNQ…VKGSGGSLLR (111 aa). A helical membrane pass occupies residues 155–175; it reads FLLTGFAGMVLCLLLTALGAF. The Cytoplasmic portion of the chain corresponds to 176-435; sequence YLSRRLVRGI…DSATPEAPPK (260 aa). Residues 183–236 enclose the HAMP domain; the sequence is RGIVGPLDQLAKVAHTVRRERDFEKRVPEAGIAELSQLGEDFNALLDELESWQA. One can recognise a GGDEF domain in the interval 279–415; sequence EQLAVLFIDS…GSRRLAELND (137 aa). Mg(2+)-binding residues include Ser-288 and Asp-330. Asp-330 functions as the Proton acceptor in the catalytic mechanism. Residues 413–426 are compositionally biased toward basic and acidic residues; that stretch reads LNDPRILQEEKEID. The interval 413-435 is disordered; sequence LNDPRILQEEKEIDSATPEAPPK.

Homodimer. Interacts with YfiR. It depends on Mg(2+) as a cofactor. Phosphorylated at both Tyr residues and Ser/Thr residues. Dephosphorylated and inactivated by TpbA.

The protein resides in the cell inner membrane. It carries out the reaction 2 GTP = 3',3'-c-di-GMP + 2 diphosphate. Its pathway is purine metabolism; 3',5'-cyclic di-GMP biosynthesis. Its activity is regulated as follows. Activity is tightly controlled by YfiR, a small periplasmic protein, and the OmpA/Pal-like outer-membrane lipoprotein YfiB. Diguanylate cyclase activity is inhibited by the specific interaction of YfiR with the TpbB periplasmic domain and is activated by YfiB, which releases the YfiR-mediated repression through sequestration of YfiR to the outer membrane. Release of repression leads to a conformational shift in TpbB/YfiN that propagates through the PAS and transmembrane domains to switch the cytoplasmic HAMP domain from an inactive to an active conformation and activate the C-terminal catalytic GGDEF domain. Thus, TpbB/YfiN appears to function by switching between discrete inactive and active functional states depending on the presence or absence of bound YfiR. Activity is also controlled by dephosphorylation of the periplasmic domain by the tyrosine phosphatase TpbA. These two mechanisms of regulation could in principle work in parallel or as part of the same regulatory pathway. Does not undergo product feedback inhibition. Its function is as follows. Catalyzes the synthesis of cyclic-di-GMP (c-di-GMP) via the condensation of 2 GTP molecules. Functionally, part of the YfiB-TpbB-YfiR (or yfiBNR) system, encoding a tripartite signaling module that modulates intracellular c-di-GMP levels. The system is a key regulator of the small colony variant (SCV) phenotype, and plays an important role in biofilm formation and in vivo persistence. The c-di-GMP produced by TpbB/YfiN stimulates the production of the Pel and Psl exopolysaccharides, which promotes surface attachment, generates an SCV phenotype and confers resistance against phagocytosis. The polypeptide is Diguanylate cyclase TpbB (Pseudomonas aeruginosa (strain ATCC 15692 / DSM 22644 / CIP 104116 / JCM 14847 / LMG 12228 / 1C / PRS 101 / PAO1)).